A 301-amino-acid chain; its full sequence is Peptidyl-prolyl cis-trans isomerase E (301 aa).

The 79-residue stretch at Lys-5–Lys-83 folds into the RRM domain. Residues Ser-91, Ser-97, and Ser-119 each carry the phosphoserine modification. The tract at residues Gly-107–Pro-140 is disordered. Residues Tyr-143 to Glu-299 form the PPIase cyclophilin-type domain.

It belongs to the cyclophilin-type PPIase family. PPIase E subfamily. Identified in the spliceosome C complex. Component of the XAB2 complex, a multimeric protein complex composed of XAB2, PRPF19, AQR, ZNF830, ISY1, and PPIE. Identified in a pentameric intron-binding (IB) complex composed of AQR, XAB2, ISY1, ZNF830 and PPIE that is incorporated into the spliceosome as a preassembled complex. The IB complex does not contain PRPF19. Interacts (via RNA-binding domain) with KMT2A (via the third PHD-type zinc-finger).

It is found in the nucleus. It catalyses the reaction [protein]-peptidylproline (omega=180) = [protein]-peptidylproline (omega=0). Its function is as follows. Involved in pre-mRNA splicing as component of the spliceosome. Combines RNA-binding and PPIase activities. Binds mRNA and has a preference for single-stranded RNA molecules with poly-A and poly-U stretches, suggesting it binds to the poly(A)-region in the 3'-UTR of mRNA molecules. Catalyzes the cis-trans isomerization of proline imidic peptide bonds in proteins. Inhibits KMT2A activity; this requires proline isomerase activity. The polypeptide is Peptidyl-prolyl cis-trans isomerase E (PPIE) (Pongo abelii (Sumatran orangutan)).